A 670-amino-acid chain; its full sequence is CLK4-associating serine/arginine rich protein (670 aa).

Phosphoserine is present on S101. 2 disordered regions span residues 171–232 (TVAE…GMAD) and 258–670 (EKAM…HYRH). Positions 182-214 (PEEEESPAEEESNSDEDEVIPDIDVEVDVDELN) are enriched in acidic residues. The span at 265-283 (RRSRRQRREFREKRLRGRK) shows a compositional bias: basic residues. Phosphoserine occurs at positions 285 and 294. Positions 290–313 (ARRDSPTYDPYKRSPSESSSESRS) are enriched in basic and acidic residues. T327 is subject to Phosphothreonine. Phosphoserine occurs at positions 331 and 335. The segment covering 340-355 (AAAAAAAAASGAATGK) has biased composition (low complexity). Residues 356–365 (PPAPPQPGGP) show a composition bias toward pro residues. The segment covering 378-400 (STSSSSSSASRTSSSRSRSSSSS) has biased composition (low complexity). Basic residues-rich tracts occupy residues 411-443 (SGRHARSRSRSWSRSRSRSRRYSRSRSRGRRHS) and 481-491 (RGGRGPRHHSS). Low complexity predominate over residues 492–529 (SRSSWSLSPSRSRSLTRSRSPSLSRSRSLSRSRSQSHS). S543 carries the phosphoserine modification. T569 carries the post-translational modification Phosphothreonine. The stretch at 581–643 (ALNRQFKADK…ERQYSRQSRS (63 aa)) forms a coiled coil. 2 stretches are compositionally biased toward basic and acidic residues: residues 586–613 (FKADKKAAQEKMIQQEHERQEREDELRA) and 621–637 (KERERREKEREEWERQY). A compositionally biased stretch (low complexity) spans 638-647 (SRQSRSPSPR). Basic residues predominate over residues 655–670 (SRRRSRSRSRSPHYRH).

This sequence belongs to the splicing factor SR family. Probably interacts with CLK4. Phosphorylated in vitro by CLK4.

It is found in the nucleus. Functionally, probably functions as an alternative splicing regulator. May regulate the mRNA splicing of genes such as CLK1. May act by regulating members of the CLK kinase family. The protein is CLK4-associating serine/arginine rich protein (CLASRP) of Bos taurus (Bovine).